Reading from the N-terminus, the 196-residue chain is MARSFYSHIREAWKTPKEGKLAELQWQRQQEWRDQGAIERIERPTRLDKARSLGYKAKQGVVVARVSVRKGTARKQRFKAGRRSKRQGVNKITRRKNLQRIAEERSGRKFRNLRVLNSYWVGEDGSQKWFEVILLDPEHGAIQNDDDLSWICDDSQRGRAYRGRTSAGQRGRGQQKRGKGTEHTRPSIRANDKRGK.

The interval 159–196 is disordered; the sequence is RAYRGRTSAGQRGRGQQKRGKGTEHTRPSIRANDKRGK. A compositionally biased stretch (basic and acidic residues) spans 179–196; that stretch reads KGTEHTRPSIRANDKRGK.

It belongs to the eukaryotic ribosomal protein eL15 family.

In Natronomonas pharaonis (strain ATCC 35678 / DSM 2160 / CIP 103997 / JCM 8858 / NBRC 14720 / NCIMB 2260 / Gabara) (Halobacterium pharaonis), this protein is Large ribosomal subunit protein eL15.